The following is a 237-amino-acid chain: Ribonuclease 3 (237 aa).

In terms of domain architecture, RNase III spans 6 to 133 (LIEVEKLIGI…VIAAVYLDKG (128 aa)). Mg(2+) is bound at residue Glu46. The active site involves Asp50. Residues Asp119 and Glu122 each contribute to the Mg(2+) site. Glu122 is a catalytic residue. In terms of domain architecture, DRBM spans 160 to 229 (DFKTRLQEVL…AKAALQRLGE (70 aa)).

This sequence belongs to the ribonuclease III family. In terms of assembly, homodimer. Requires Mg(2+) as cofactor.

It is found in the cytoplasm. It catalyses the reaction Endonucleolytic cleavage to 5'-phosphomonoester.. Functionally, digests double-stranded RNA. Involved in the processing of primary rRNA transcript to yield the immediate precursors to the large and small rRNAs (23S and 16S). Processes some mRNAs, and tRNAs when they are encoded in the rRNA operon. Processes pre-crRNA and tracrRNA of type II CRISPR loci if present in the organism. The chain is Ribonuclease 3 from Clostridium perfringens (strain 13 / Type A).